The primary structure comprises 216 residues: Large ribosomal subunit protein uL4 (216 aa).

Positions K51–K78 are disordered. Over residues Y64 to D76 the composition is skewed to basic residues.

It belongs to the universal ribosomal protein uL4 family. In terms of assembly, part of the 50S ribosomal subunit.

Its function is as follows. One of the primary rRNA binding proteins, this protein initially binds near the 5'-end of the 23S rRNA. It is important during the early stages of 50S assembly. It makes multiple contacts with different domains of the 23S rRNA in the assembled 50S subunit and ribosome. Functionally, forms part of the polypeptide exit tunnel. This is Large ribosomal subunit protein uL4 from Treponema pallidum (strain Nichols).